Reading from the N-terminus, the 83-residue chain is Large ribosomal subunit protein bL27 (83 aa).

Residues 1–20 (MAHKKGASSSRNGRDSNPQY) are disordered. The segment covering 7 to 19 (ASSSRNGRDSNPQ) has biased composition (polar residues).

This sequence belongs to the bacterial ribosomal protein bL27 family.

The protein is Large ribosomal subunit protein bL27 of Bifidobacterium animalis subsp. lactis (strain AD011).